The sequence spans 362 residues: Probable non-structural 41.0 kDa protein (362 aa).

The interval Met341–Ser362 is disordered.

The protein is Probable non-structural 41.0 kDa protein (S6) of Maize rough dwarf virus (MRDV).